Consider the following 406-residue polypeptide: Cysteine desulfurase (406 aa).

The residue at position 226 (Lys226) is an N6-(pyridoxal phosphate)lysine. Residue Cys364 is the Cysteine persulfide intermediate of the active site.

This sequence belongs to the class-V pyridoxal-phosphate-dependent aminotransferase family. Csd subfamily. Homodimer. Interacts with SufE and the SufBCD complex composed of SufB, SufC and SufD. The interaction with SufE is required to mediate the direct transfer of the sulfur atom from the S-sulfanylcysteine. Requires pyridoxal 5'-phosphate as cofactor.

Its subcellular location is the cytoplasm. It catalyses the reaction (sulfur carrier)-H + L-cysteine = (sulfur carrier)-SH + L-alanine. The catalysed reaction is L-selenocysteine + AH2 = hydrogenselenide + L-alanine + A + H(+). Its pathway is cofactor biosynthesis; iron-sulfur cluster biosynthesis. Functionally, cysteine desulfurases mobilize the sulfur from L-cysteine to yield L-alanine, an essential step in sulfur metabolism for biosynthesis of a variety of sulfur-containing biomolecules. Component of the suf operon, which is activated and required under specific conditions such as oxidative stress and iron limitation. Acts as a potent selenocysteine lyase in vitro, that mobilizes selenium from L-selenocysteine. Selenocysteine lyase activity is however unsure in vivo. The sequence is that of Cysteine desulfurase from Yersinia pseudotuberculosis serotype IB (strain PB1/+).